The chain runs to 224 residues: Uracil-DNA glycosylase (224 aa).

The active-site Proton acceptor is the Asp-64.

It belongs to the uracil-DNA glycosylase (UDG) superfamily. UNG family.

The protein resides in the cytoplasm. The enzyme catalyses Hydrolyzes single-stranded DNA or mismatched double-stranded DNA and polynucleotides, releasing free uracil.. Excises uracil residues from the DNA which can arise as a result of misincorporation of dUMP residues by DNA polymerase or due to deamination of cytosine. The sequence is that of Uracil-DNA glycosylase from Clostridioides difficile (strain 630) (Peptoclostridium difficile).